We begin with the raw amino-acid sequence, 150 residues long: Urease accessory protein UreE (150 aa).

The protein belongs to the UreE family.

Its subcellular location is the cytoplasm. Involved in urease metallocenter assembly. Binds nickel. Probably functions as a nickel donor during metallocenter assembly. In Staphylococcus carnosus (strain TM300), this protein is Urease accessory protein UreE.